Reading from the N-terminus, the 148-residue chain is UPF0260 protein mll2411 (148 aa).

Belongs to the UPF0260 family.

The protein is UPF0260 protein mll2411 of Mesorhizobium japonicum (strain LMG 29417 / CECT 9101 / MAFF 303099) (Mesorhizobium loti (strain MAFF 303099)).